A 124-amino-acid polypeptide reads, in one-letter code: Large ribosomal subunit protein eL31 (124 aa).

The protein belongs to the eukaryotic ribosomal protein eL31 family. Component of the large ribosomal subunit.

Its subcellular location is the cytoplasm. In terms of biological role, component of the large ribosomal subunit. The ribosome is a large ribonucleoprotein complex responsible for the synthesis of proteins in the cell. This Paralichthys olivaceus (Bastard halibut) protein is Large ribosomal subunit protein eL31 (rpl31).